The primary structure comprises 103 residues: uncharacterized protein (103 aa).

A run of 3 helical transmembrane segments spans residues 12-34 (GFSW…LTIS), 49-66 (TLMS…ALIA), and 79-101 (FARG…VAGG).

The protein resides in the cell membrane. This is an uncharacterized protein from Pasteurella multocida (strain Pm70).